The primary structure comprises 177 residues: Protein ParB (177 aa).

The first 26 residues, 1–26 (MKRRSYAMLRAAAALAVLVVASPAWA), serve as a signal peptide directing secretion. The 131-residue stretch at 27–157 (ELRGEVVRII…RGKRVGLWSD (131 aa)) folds into the TNase-like domain. Catalysis depends on residues Arg53, Glu61, and Arg95.

As to quaternary structure, monomer. Requires Ca(2+) as cofactor. Post-translationally, the N-terminus is blocked.

The protein localises to the secreted. Its activity is regulated as follows. Endonuclease activity is inhibited by EDTA. Its function is as follows. Involved in plasmid partition. An endonuclease that acts on supercoiled dsDNA, converting it first to open circular DNA and then linearizing it. Preferentially cleaves regions in dsDNA that are capable of forming ssDNA, such as AT-rich regions and sequences that can form cruciforms. Has poor endonucleolytic activity on linear DNA, has 5'-3' exonuclease activity on dsDNA cleaving generating 3'-phosphonucleotides. This chain is Protein ParB, found in Escherichia coli.